A 236-amino-acid chain; its full sequence is Purine nucleoside phosphorylase DeoD-type (236 aa).

H5 contributes to the a purine D-ribonucleoside binding site. Phosphate contacts are provided by residues G21, R25, R44, and 88–91 (RVGS). A purine D-ribonucleoside is bound by residues 180–182 (EME) and 204–205 (SD). The active-site Proton donor is the D205.

Belongs to the PNP/UDP phosphorylase family. As to quaternary structure, homohexamer; trimer of homodimers.

The enzyme catalyses a purine D-ribonucleoside + phosphate = a purine nucleobase + alpha-D-ribose 1-phosphate. It catalyses the reaction a purine 2'-deoxy-D-ribonucleoside + phosphate = a purine nucleobase + 2-deoxy-alpha-D-ribose 1-phosphate. Functionally, catalyzes the reversible phosphorolytic breakdown of the N-glycosidic bond in the beta-(deoxy)ribonucleoside molecules, with the formation of the corresponding free purine bases and pentose-1-phosphate. The polypeptide is Purine nucleoside phosphorylase DeoD-type (Psychromonas ingrahamii (strain DSM 17664 / CCUG 51855 / 37)).